Reading from the N-terminus, the 322-residue chain is Methionyl-tRNA formyltransferase (322 aa).

(6S)-5,6,7,8-tetrahydrofolate is bound at residue 112-115 (SLLP).

Belongs to the Fmt family.

It catalyses the reaction L-methionyl-tRNA(fMet) + (6R)-10-formyltetrahydrofolate = N-formyl-L-methionyl-tRNA(fMet) + (6S)-5,6,7,8-tetrahydrofolate + H(+). Its function is as follows. Attaches a formyl group to the free amino group of methionyl-tRNA(fMet). The formyl group appears to play a dual role in the initiator identity of N-formylmethionyl-tRNA by promoting its recognition by IF2 and preventing the misappropriation of this tRNA by the elongation apparatus. The sequence is that of Methionyl-tRNA formyltransferase from Synechococcus sp. (strain JA-2-3B'a(2-13)) (Cyanobacteria bacterium Yellowstone B-Prime).